A 737-amino-acid polypeptide reads, in one-letter code: Catalase-peroxidase (737 aa).

The tract at residues 1–29 is disordered; the sequence is MTDSPDATTGGCPVAHGDRLPHPTQGGAN. Residues 101–227 constitute a cross-link (tryptophyl-tyrosyl-methioninium (Trp-Tyr) (with M-253)); the sequence is WHSAGTYRVS…LGATHMGLIY (127 aa). The active-site Proton acceptor is His-102. The segment at residues 227–253 is a cross-link (tryptophyl-tyrosyl-methioninium (Tyr-Met) (with W-101)); that stretch reads YVNPEGPEGKPDPVAAARDIRETFGRM. His-268 contributes to the heme b binding site.

The protein belongs to the peroxidase family. Peroxidase/catalase subfamily. As to quaternary structure, homodimer or homotetramer. It depends on heme b as a cofactor. Formation of the three residue Trp-Tyr-Met cross-link is important for the catalase, but not the peroxidase activity of the enzyme.

The enzyme catalyses H2O2 + AH2 = A + 2 H2O. It catalyses the reaction 2 H2O2 = O2 + 2 H2O. In terms of biological role, bifunctional enzyme with both catalase and broad-spectrum peroxidase activity. In Saccharopolyspora erythraea (strain ATCC 11635 / DSM 40517 / JCM 4748 / NBRC 13426 / NCIMB 8594 / NRRL 2338), this protein is Catalase-peroxidase.